Here is a 222-residue protein sequence, read N- to C-terminus: MDQSFDQPWPTSLAEARAIQQHIRTRIITHDAHGPIRTVAGVDTGYSGDSALAAVVVLAFPSLEVLDYAVARRQIDFPYVPGYLSFREAPAVLDALASLRIAPDLLICDGHGLAHPRRCGIASHLGVLTDLPSIGCAKSLLVGTHEPPPDVRGAWTPLHDQGEVVGAALRTRPGVRPVYVSIGHRVALETAIRFVMACVTRYRLPETTRAADALASHGRIPR.

Mg(2+)-binding residues include D43 and D109.

This sequence belongs to the endonuclease V family. The cofactor is Mg(2+).

The protein localises to the cytoplasm. It catalyses the reaction Endonucleolytic cleavage at apurinic or apyrimidinic sites to products with a 5'-phosphate.. In terms of biological role, DNA repair enzyme involved in the repair of deaminated bases. Selectively cleaves double-stranded DNA at the second phosphodiester bond 3' to a deoxyinosine leaving behind the intact lesion on the nicked DNA. The polypeptide is Endonuclease V (Roseiflexus sp. (strain RS-1)).